The primary structure comprises 91 residues: Cell division topological specificity factor (91 aa).

The protein belongs to the MinE family.

In terms of biological role, prevents the cell division inhibition by proteins MinC and MinD at internal division sites while permitting inhibition at polar sites. This ensures cell division at the proper site by restricting the formation of a division septum at the midpoint of the long axis of the cell. The polypeptide is Cell division topological specificity factor (Lachnospira eligens (strain ATCC 27750 / DSM 3376 / VPI C15-48 / C15-B4) (Eubacterium eligens)).